The primary structure comprises 218 residues: Ribose-5-phosphate isomerase A (218 aa).

Substrate-binding positions include 28–31 (TGST), 81–84 (DGAD), and 94–97 (KGGG). The active-site Proton acceptor is E103. K121 provides a ligand contact to substrate.

It belongs to the ribose 5-phosphate isomerase family. Homodimer.

It catalyses the reaction aldehydo-D-ribose 5-phosphate = D-ribulose 5-phosphate. It participates in carbohydrate degradation; pentose phosphate pathway; D-ribose 5-phosphate from D-ribulose 5-phosphate (non-oxidative stage): step 1/1. Its function is as follows. Catalyzes the reversible conversion of ribose-5-phosphate to ribulose 5-phosphate. The protein is Ribose-5-phosphate isomerase A of Vibrio cholerae serotype O1 (strain ATCC 39541 / Classical Ogawa 395 / O395).